The sequence spans 503 residues: Zinc finger protein JACKDAW (503 aa).

Over residues 32 to 51 the composition is skewed to low complexity; it reads IPDLNPNSNPNPNAKPNSSS. Positions 32-68 are disordered; that stretch reads IPDLNPNSNPNPNAKPNSSSAKKKRNQPGTPDPDADV. Position 72 is a phosphoserine (serine 72). 2 consecutive C2H2-type zinc fingers follow at residues 82–104 and 124–154; these read FVCE…RRGH and YICP…SRKH. 2 consecutive short sequence motifs (nuclear localization signal) follow at residues 100 to 107 and 146 to 153; these read HRRGHNLP and IKKHYSRK. The C2H2-type 2; degenerate zinc-finger motif lies at 159–182; the sequence is WKCEKCSKKYAVQSDWKAHAKTCG. Positions 161, 164, 177, 181, 188, 190, 203, and 207 each coordinate Zn(2+). The segment at 186 to 209 adopts a CCHC-type 2; atypical zinc-finger fold; it reads YKCDCGTLFSRKDSFITHRAFCDA. Positions 196-208 are SHR-binding; that stretch reads RKDSFITHRAFCD. 2 disordered regions span residues 301–417 and 432–465; these read SSSS…SSPM and RENH…LNPA. The span at 319-358 shows a compositional bias: low complexity; the sequence is TSTNPSLTLSSSSTSQQTSASLQHQTLKDSSFSPLFSSSS. Polar residues predominate over residues 381 to 392; that stretch reads MGSTRSNSSTAP. Low complexity predominate over residues 396–407; the sequence is AGPTMTSSSATA. Residues 444-465 show a composition bias toward polar residues; that stretch reads GVSTSSVDNNPFQSNRSGLNPA.

As to quaternary structure, interacts with SHR, SCR, MGP and itself. The heterodimer with SHR involves its zinc fingers. Interacts with SIEL. Binds to RGA and SCL3 competitively in the nucleus. As to expression, expressed in the quiescent center, the ground tissue stem cells and to a lesser extent in mature cortex and endodermis cells.

Its subcellular location is the nucleus. Its function is as follows. Transcription factor that, together with BIB, regulates tissue boundaries and asymmetric cell division by a rapid up-regulation of 'SCARECROW' (SCR), thus controlling the nuclear localization of 'SHORT-ROOT' (SHR) and restricting its action. Binds DNA via its zinc fingers. Recognizes and binds to SCL3 promoter sequence 5'-AGACAA-3' to promote its expression when in complex with RGA. Confines CYCD6 expression to the cortex-endodermis initial/daughter (CEI/CEID) tissues. Required for radial patterning and stem cell maintenance. Counteracted by 'MAGPIE' (MGP). Binds to the SCR and MGP promoter sequences. Controls position-dependent signals that regulate epidermal-cell-type patterning. In Arabidopsis thaliana (Mouse-ear cress), this protein is Zinc finger protein JACKDAW.